The sequence spans 227 residues: Large ribosomal subunit protein bL25 (227 aa).

Residues 199–227 (AIAEAQSAEAAEEKAEESAEDEKKDGEEA) are disordered. Positions 209-227 (AEEKAEESAEDEKKDGEEA) are enriched in basic and acidic residues.

This sequence belongs to the bacterial ribosomal protein bL25 family. CTC subfamily. As to quaternary structure, part of the 50S ribosomal subunit; part of the 5S rRNA/L5/L18/L25 subcomplex. Contacts the 5S rRNA. Binds to the 5S rRNA independently of L5 and L18.

Its function is as follows. This is one of the proteins that binds to the 5S RNA in the ribosome where it forms part of the central protuberance. The protein is Large ribosomal subunit protein bL25 of Methylobacterium radiotolerans (strain ATCC 27329 / DSM 1819 / JCM 2831 / NBRC 15690 / NCIMB 10815 / 0-1).